Consider the following 261-residue polypeptide: DNA repair protein RecO (261 aa).

It belongs to the RecO family.

Involved in DNA repair and RecF pathway recombination. The chain is DNA repair protein RecO from Chlorobium phaeobacteroides (strain DSM 266 / SMG 266 / 2430).